Here is a 731-residue protein sequence, read N- to C-terminus: Unconventional prefoldin RPB5 interactor-like protein (731 aa).

Coiled coils occupy residues 91–115 (RLKL…KLHT) and 143–176 (LAEH…LRKL). Residues 205–217 (PLKSTNESSPKSL) are compositionally biased toward polar residues. Disordered regions lie at residues 205–224 (PLKS…EEDE), 259–302 (MSGE…EEEV), and 370–396 (ASEE…TVSE). Residues 220–258 (EEEDELWKKLEAEEQNEADELSSEAEESLKTTDNLVRQL) adopt a coiled-coil conformation. Acidic residues predominate over residues 285–300 (ISEDDGDDDDEGDQEE). Coiled-coil stretches lie at residues 357–379 (DDLQ…EVVE) and 452–477 (SIKT…VKEN). Composition is skewed to polar residues over residues 508–518 (GAIPSPSSDQS) and 575–599 (SQFS…TSND). Disordered stretches follow at residues 508-527 (GAIP…KPSD), 567-682 (GSAY…DLRD), and 694-731 (VEKE…LNKT). Residues 611-621 (FYEKYEKDRAK) show a composition bias toward basic and acidic residues. The span at 623–644 (SKSNSSEGDATDPESATKSILR) shows a compositional bias: polar residues. Positions 661 to 673 (KKGRKVRNQKKKE) are enriched in basic residues. A compositionally biased stretch (basic and acidic residues) spans 721-731 (RFKEQRALNKT).

This sequence belongs to the RNA polymerase II subunit 5-mediating protein family. In terms of assembly, interacts with serine/threonine-protein phosphatases flw/PP1beta9C and Pp1-87B with higher affinity for Pp1-87B.

It localises to the cytoplasm. Its subcellular location is the chromosome. It is found in the nucleus. Its function is as follows. Inhibits the activity of serine/threonine-protein phosphatases flw/PP1beta9C and Pp1-87B. Required for germ line cell viability and differentiation, normal transcriptional activity and maintenance of DNA integrity. The chain is Unconventional prefoldin RPB5 interactor-like protein from Drosophila melanogaster (Fruit fly).